A 444-amino-acid chain; its full sequence is Phosphoribosylamine--glycine ligase (444 aa).

Residues 109 to 324 form the ATP-grasp domain; the sequence is RNLFKKYEID…FLDVCFAIAE (216 aa). ATP is bound at residue 140–202; sequence MTSLGKDVVV…EEKLVGVEFT (63 aa). Residues Gln282, Glu294, and Asn296 each contribute to the Mg(2+) site. Residues Gln282, Glu294, and Asn296 each contribute to the Mn(2+) site.

The protein belongs to the GARS family. Mg(2+) is required as a cofactor. Requires Mn(2+) as cofactor.

It catalyses the reaction 5-phospho-beta-D-ribosylamine + glycine + ATP = N(1)-(5-phospho-beta-D-ribosyl)glycinamide + ADP + phosphate + H(+). The protein operates within purine metabolism; IMP biosynthesis via de novo pathway; N(1)-(5-phospho-D-ribosyl)glycinamide from 5-phospho-alpha-D-ribose 1-diphosphate: step 2/2. This is Phosphoribosylamine--glycine ligase from Methanococcus maripaludis (strain C5 / ATCC BAA-1333).